Reading from the N-terminus, the 467-residue chain is H(+)/Cl(-) exchange transporter ClcA (467 aa).

Over 1–30 (MKSQTIPTRRVRGFRRAAVIRQLLSRDKTP) the chain is Cytoplasmic. The helical transmembrane segment at 31–67 (LTILLLASLTGVLAGLAGVAFEKAVAWVTAHRIEGLA) threads the bilayer. Residues 68–74 (QVAHIPW) are Periplasmic-facing. A helical transmembrane segment spans residues 75–98 (LVWLLAFLFSALLAMVGYFLVRRF). The Cytoplasmic portion of the chain corresponds to 99 to 106 (APEAGGSG). The Selectivity filter part_1 motif lies at 104-108 (GSGIP). S105 serves as a coordination point for chloride. Positions 107-114 (IPEIEGAL) form an intramembrane region, helical. Residues 115-121 (EELRPVR) lie on the Cytoplasmic side of the membrane. Residues 122-139 (WWRVLPVKFFGGMGTLGA) form a helical membrane-spanning segment. Residues 140–145 (GMVLGR) lie on the Periplasmic side of the membrane. The short motif at 144–148 (GREGP) is the Selectivity filter part_2 element. Residues 146–164 (EGPMVQMGGNIGRMVLDIF) form a helical membrane-spanning segment. At 165 to 174 (HRPDAEARHT) the chain is on the cytoplasmic side. 2 intramembrane regions (helical) span residues 175 to 187 (LLAT…LAAA) and 191 to 199 (PLAGILFII). Residues 200–212 (EEMRTQFHYNLIS) lie on the Cytoplasmic side of the membrane. A helical membrane pass occupies residues 213-230 (IKAVFTGVIMSTIVFRIF). Residues 231-250 (NGEKSVIEVGQLTDAPVYTL) lie on the Periplasmic side of the membrane. The helical transmembrane segment at 251–279 (WLYLLLGIIFGAVGPLFNRLVLGMQDVFA) threads the bilayer. The Cytoplasmic segment spans residues 280–285 (RIHGGN). The chain crosses the membrane as a helical span at residues 286–307 (TTRWVLLGGAIGGACGLLALWE). Over 308–327 (PAAAGGGFGLIPIAAAGNFT) the chain is Periplasmic. The helical transmembrane segment at 328–347 (VGMLLFIFIARVVTTVFCFS) threads the bilayer. At 348–352 (SGAPG) the chain is on the cytoplasmic side. The short motif at 353-357 (GIFAP) is the Selectivity filter part_3 element. Residues 353–374 (GIFAPMLALGTLLGSAFGMACA) traverse the membrane as a helical segment. The chloride site is built by I354 and F355. At 375-384 (AWFPQWHLQA) the chain is on the periplasmic side. The helical intramembrane region spans 385-399 (GTFAIAGMGALLAAS). The segment at residues 400–402 (VRA) is an intramembrane region (note=Loop between two helices). An intramembrane region (helical) is located at residues 403–414 (PITGIVLVLEMT). Positions 415-419 (DNYQL) form an intramembrane region, note=Loop between two helices. The helical transmembrane segment at 420-436 (ILPMIITCLGATLLAQF) threads the bilayer. The Cytoplasmic segment spans residues 437-467 (LGGKPLYSTILARTLAKQEAERQAQADGRNT). Residue Y443 coordinates chloride.

The protein belongs to the chloride channel (TC 2.A.49) family. ClcA subfamily. In terms of assembly, homodimer.

The protein localises to the cell inner membrane. The enzyme catalyses 2 chloride(in) + H(+)(out) = 2 chloride(out) + H(+)(in). Functionally, proton-coupled chloride transporter. Functions as antiport system and exchanges two chloride ions for 1 proton. Probably acts as an electrical shunt for an outwardly-directed proton pump that is linked to amino acid decarboxylation, as part of the extreme acid resistance (XAR) response. The chain is H(+)/Cl(-) exchange transporter ClcA from Cronobacter sakazakii (strain ATCC BAA-894) (Enterobacter sakazakii).